Here is a 400-residue protein sequence, read N- to C-terminus: CinA-like protein (400 aa).

This sequence belongs to the CinA family.

In Escherichia coli (strain SE11), this protein is CinA-like protein.